The primary structure comprises 268 residues: Microtubule-associated protein RP/EB family member 1 (268 aa).

Residue Ala-2 is modified to N-acetylalanine. The Calponin-homology (CH) domain maps to 14–116 (NLSRHDMLAW…FVQWFKKFFD (103 aa)). Lys-66 is modified (N6-crotonyllysine). Residue Tyr-124 is modified to Phosphotyrosine. The tract at residues 124–268 (YDPVAARQGQ…GGPQEEQEEY (145 aa)) is interaction with MTUS2/TIP150. A disordered region spans residues 146–191 (LSKPKKPLGSGSAAPQRPIATQRTTAAPKAGPGMVRKNPGMGNGDD). Ser-155 carries the post-translational modification Phosphoserine. The 71-residue stretch at 185 to 255 (GMGNGDDEAA…LYATDEGFVI (71 aa)) folds into the EB1 C-terminal domain. The interaction with APC stretch occupies residues 206–211 (TVEDLE). The tract at residues 208–268 (EDLEKERDFY…GGPQEEQEEY (61 aa)) is DCTN1-binding. Lys-220 bears the N6-acetyllysine mark. Residues 220–242 (KLRNIELICQENEGENDPVLQRI) are APC-binding. The interval 232–255 (EGENDPVLQRIVDILYATDEGFVI) is interaction with SKA1.

This sequence belongs to the MAPRE family. In terms of assembly, homodimer. Heterodimer with MAPRE3. Interacts with DCTN1, DCTN2, TERF1 and dynein intermediate chain. Interaction with DIAPH1 and DIAPH2. Interacts (via C-terminal residues 206-211) with APC (via C-terminal residues 2674-2845); the interaction inhibits association with and bundling of F-actin. Interacts with CLASP2, DST, KIF2C and STIM1; probably required for their targeting to the growing microtubule plus ends. Interacts with MTUS2; interaction is direct and probably targets MTUS2 to microtubules. Interacts (via C-terminus) with SKA1 (via SXIP motif); the interaction is direct and stabilizes the kinetochore-microtubule attachment of the SKA1 complex. Interacts with APC2. Interacts with CLASP1. Interacts with CDK5RAP2. According to another report, MAPRE1 does not interact with CDK5RAP2. Interacts with MACF1. Interacts with RABL2/RABL2A; binds preferentially to GTP-bound RABL2. Interacts with KCNAB2. Interacts (via C-terminus) with CLIP1. Interacts with SLAIN2 and SLAIN1. Interacts with KIF18B; this interaction is required for efficient accumulation of KIF18B at microtubule plus ends. Interacts with MISP. Interacts with KNSTRN. Interacts with NCKAP5L. Interacts with AKAP9. Interacts with PDE4DIP; this interaction, which is PDE4DIP isoform-specific, is required for its recruitment to the Golgi apparatus. Interacts with CAMSAP2. May form a pericentrosomal complex with AKAP9, CDK5RAP2 and PDE4DIP isoform 2/MMG8/SMYLE; within this complex, MAPRE1 binding to CDK5RAP2 may be mediated by PDE4DIP. Contrary to other mammalian species, does not interact with CDK5RAP2, possibly due to the lack of conservation of the MAPRE1-binding motif in rat CDK5RAP2. Interacts with AKNA. Interacts with GAS2L1, GAS2L2, and GAS2L3. Interacts with RARRES1 and AGBL2. In terms of processing, acetylation at Lys-220 by KAT2B/PCAF promotes dynamic kinetochore-microtubule interactions in early mitosis. Post-translationally, crotonylated by KAT5 during mitosis, promoting astral microtubule plasticity and dynamic connection between astral microtubules and the cortex during mitotic chromosome segregation, thereby ensuring accurate spindle positioning in mitosis. Decrotonylated by HDAC3.

The protein localises to the cytoplasm. It localises to the cytoskeleton. The protein resides in the microtubule organizing center. Its subcellular location is the centrosome. It is found in the golgi apparatus. The protein localises to the spindle. It localises to the spindle pole. In terms of biological role, plus-end tracking protein (+TIP) that binds to the plus-end of microtubules and regulates the dynamics of the microtubule cytoskeleton. Recruits other +TIP proteins to microtubules by binding to a conserved Ser-X-Leu-Pro (SXLP) motif in their polypeptide chains. Promotes cytoplasmic microtubule nucleation and elongation. Involved in mitotic spindle positioning by stabilizing microtubules and promoting dynamic connection between astral microtubules and the cortex during mitotic chromosome segregation. Assists chromosome alignment in metaphase by recruiting the SKA complex to the spindle and stabilizing its interactions with microtubule bundles (K-fibers). Also acts as a regulator of minus-end microtubule organization: interacts with the complex formed by AKAP9 and PDE4DIP, leading to recruit CAMSAP2 to the Golgi apparatus, thereby tethering non-centrosomal minus-end microtubules to the Golgi, an important step for polarized cell movement. Promotes elongation of CAMSAP2-decorated microtubule stretches on the minus-end of microtubules. Acts as a regulator of autophagosome transport via interaction with CAMSAP2. Functions downstream of Rho GTPases and DIAPH1 in stable microtubule formation. May play a role in cell migration. The chain is Microtubule-associated protein RP/EB family member 1 (Mapre1) from Rattus norvegicus (Rat).